A 127-amino-acid polypeptide reads, in one-letter code: Fluoride-specific ion channel FluC (127 aa).

4 helical membrane passes run 4-24 (SILAIALGAALGALLRWFLGL), 36-56 (GTLLANLVGGYAIGAAIAYFA), 68-88 (LIITGFCGGLTTFSTFSAEVV), and 99-119 (AAGAIATHVGGSLLMTLLGLF). Positions 75 and 78 each coordinate Na(+).

It belongs to the fluoride channel Fluc/FEX (TC 1.A.43) family.

It localises to the cell inner membrane. The catalysed reaction is fluoride(in) = fluoride(out). Na(+) is not transported, but it plays an essential structural role and its presence is essential for fluoride channel function. Its function is as follows. Fluoride-specific ion channel. Important for reducing fluoride concentration in the cell, thus reducing its toxicity. This chain is Fluoride-specific ion channel FluC, found in Pseudomonas paraeruginosa (strain DSM 24068 / PA7) (Pseudomonas aeruginosa (strain PA7)).